Consider the following 626-residue polypeptide: MSSSLMRRVGSLAASAIIFPGIAHAASNYKLKESWEGEKILNHFHFFDNADPTNGFVTYVNQSYAESAGLVKTTDSGSLYLGVDYENVLTVDGPGRESVRIESNEYYDQGLYVVDIQHMPGSICGTWPAFWTVGPDWPTDGEIDIIEGVNKHDANKIVLHTSDTCDVGGGYKMTGDMTSSECGEASGTIGCVVQGKQGSSGDPFNEQGGGVYAMEWQEKYLKIWYFPRSSIPESLTAGTPDVSSFGTPMAHLQGSCNFKERFTHQKLILDTTFCGDWAGGVFGDSGCPVSDPSDPMLSCKNYVAENPAVYKNAYWELNSIKIYQLGGTAEVEGTQSAAAESTAAEATAAETTAAATQTANGGSIEEITTSTHSVTRTKTVSATHSTETAAVTETAAATTAAASVASEVDATNTQPVSKTKSTSYVTSTTTLCPVESSQAAATESVSRTKTTSYVTITTTLCPVESLQTANAVPSAKASTDAAAATTPAAEPHPSNAETPADSKSSADAVTAQATKTTIAVNTPNPATDSASSVPPDSIVYTAPEVTSSSSVPLFTIVSSSSQFVTVPTAAPSSFEPTDAVRDGADSYSTAASPTTPSNPVFTGVGSKVSISASVAIAAFVMLLLVN.

The first 25 residues, Met1–Ala25, serve as a signal peptide directing secretion. In terms of domain architecture, GH16 spans Glu33–Gly286. The N-linked (GlcNAc...) asparagine glycan is linked to Asn61. The Nucleophile role is filled by Glu142. Glu147 (proton donor) is an active-site residue. Over residues Ala477–Ser494 the composition is skewed to low complexity. The disordered stretch occupies residues Ala477–Val533. The segment covering Asn495–Val533 has biased composition (polar residues). A lipid anchor (GPI-anchor amidated glycine) is attached at Gly603. Positions Val604–Asn626 are cleaved as a propeptide — removed in mature form.

This sequence belongs to the glycosyl hydrolase 16 family.

It localises to the cell membrane. The enzyme catalyses Endohydrolysis of (1-&gt;3)- or (1-&gt;4)-linkages in beta-D-glucans when the glucose residue whose reducing group is involved in the linkage to be hydrolyzed is itself substituted at C-3.. Functionally, mixed-linked glucanase involved in the degradation of complex natural cellulosic substrates. Active on laminarin. lichenan, soluble carboxymethyl cellulose but not on pustulan. The chain is Endo-1,3(4)-beta-glucanase xgeA (xgeA) from Emericella nidulans (strain FGSC A4 / ATCC 38163 / CBS 112.46 / NRRL 194 / M139) (Aspergillus nidulans).